A 183-amino-acid chain; its full sequence is Ribonuclease H (183 aa).

Residues 2–151 (SQARFIAFSD…VDQLAQAAAR (150 aa)) form the RNase H type-1 domain. Mg(2+)-binding residues include Asp-11, Glu-57, Asp-79, and Asp-143.

It belongs to the RNase H family. In terms of assembly, monomer. Mg(2+) serves as cofactor.

The protein resides in the cytoplasm. The catalysed reaction is Endonucleolytic cleavage to 5'-phosphomonoester.. Its function is as follows. Endonuclease that specifically degrades the RNA of RNA-DNA hybrids. This chain is Ribonuclease H, found in Anaeromyxobacter dehalogenans (strain 2CP-1 / ATCC BAA-258).